The chain runs to 467 residues: Tripartite motif-containing protein 75 (467 aa).

The segment at 16 to 57 (CPICLDDLTDPVTVECGHNFCRSCIKDFWAGQQATSSCPVCR) adopts an RING-type zinc-finger fold. Residues 90–131 (ESSTSCERHNQALTLFCEDDLQLLCDQCVEPESHGRHQVLSI) form a B box-type zinc finger. Positions 95, 98, 117, and 123 each coordinate Zn(2+). Positions 168 to 222 (VTLREQAEAQRSQLTSECEKLMRFLDQEERAAFSRLEDEEMRLEKRLLDNIAALE) form a coiled coil. A B30.2/SPRY domain is found at 276 to 466 (YSFPLQYSAL…LRLCSATDSE (191 aa)).

It belongs to the TRIM/RBCC family.

It is found in the cytoplasm. Its subcellular location is the cytoskeleton. The protein localises to the spindle. In terms of biological role, may play a role in female meiosis. The protein is Tripartite motif-containing protein 75 of Mus musculus (Mouse).